Reading from the N-terminus, the 365-residue chain is Probable dual-specificity RNA methyltransferase RlmN (365 aa).

Glu-108 acts as the Proton acceptor in catalysis. In terms of domain architecture, Radical SAM core spans 114 to 352 (YPDRNTVCIS…SCTVRDTRGR (239 aa)). Residues Cys-121 and Cys-358 are joined by a disulfide bond. Residues Cys-128, Cys-132, and Cys-135 each contribute to the [4Fe-4S] cluster site. Residues 179–180 (GE), Ser-213, 236–238 (SLH), and Asn-315 each bind S-adenosyl-L-methionine. Catalysis depends on Cys-358, which acts as the S-methylcysteine intermediate.

This sequence belongs to the radical SAM superfamily. RlmN family. [4Fe-4S] cluster is required as a cofactor.

It is found in the cytoplasm. The catalysed reaction is adenosine(2503) in 23S rRNA + 2 reduced [2Fe-2S]-[ferredoxin] + 2 S-adenosyl-L-methionine = 2-methyladenosine(2503) in 23S rRNA + 5'-deoxyadenosine + L-methionine + 2 oxidized [2Fe-2S]-[ferredoxin] + S-adenosyl-L-homocysteine. The enzyme catalyses adenosine(37) in tRNA + 2 reduced [2Fe-2S]-[ferredoxin] + 2 S-adenosyl-L-methionine = 2-methyladenosine(37) in tRNA + 5'-deoxyadenosine + L-methionine + 2 oxidized [2Fe-2S]-[ferredoxin] + S-adenosyl-L-homocysteine. Functionally, specifically methylates position 2 of adenine 2503 in 23S rRNA and position 2 of adenine 37 in tRNAs. The polypeptide is Probable dual-specificity RNA methyltransferase RlmN (Mycolicibacterium vanbaalenii (strain DSM 7251 / JCM 13017 / BCRC 16820 / KCTC 9966 / NRRL B-24157 / PYR-1) (Mycobacterium vanbaalenii)).